The sequence spans 822 residues: Aminopeptidase O (822 aa).

Histidine 480 is a binding site for Zn(2+). Glutamate 481 functions as the Proton acceptor in the catalytic mechanism. Histidine 484 and glutamate 503 together coordinate Zn(2+). The short motif at 692 to 702 (RRPGKRQRRKR) is the Nucleolar localization signal element.

It belongs to the peptidase M1 family. It depends on Zn(2+) as a cofactor.

It localises to the nucleus. It is found in the nucleolus. In terms of biological role, aminopeptidase which catalyzes the hydrolysis of amino acid residues from the N-terminus of peptide or protein substrates. The polypeptide is Aminopeptidase O (Aopep) (Rattus norvegicus (Rat)).